A 152-amino-acid chain; its full sequence is MQCPFCNHGELKVIDSRNAPEANAIKRRRECLKCSQRFTTFETVELTLQVLKRDGRYENFQESKLIHGLNAASSHTRIGQDQVHAIASNVKSELLGKQNREISTKEIGELVMKYLKKADMIAYIRFACVYRRFKDVGELMEVLLSATPDMEK.

A zinc finger lies at 3 to 34 (CPFCNHGELKVIDSRNAPEANAIKRRRECLKC). One can recognise an ATP-cone domain in the interval 48 to 138 (LQVLKRDGRY…VYRRFKDVGE (91 aa)).

The protein belongs to the NrdR family. The cofactor is Zn(2+).

Negatively regulates transcription of bacterial ribonucleotide reductase nrd genes and operons by binding to NrdR-boxes. The sequence is that of Transcriptional repressor NrdR from Chlamydia pneumoniae (Chlamydophila pneumoniae).